Consider the following 256-residue polypeptide: Putative cysteine-rich repeat secretory protein 21 (256 aa).

Positions 1 to 30 (MYSSVSKRLVSVHILVVVALQLLFIPNVLS) are cleaved as a signal peptide. Gnk2-homologous domains are found at residues 37–139 (YLHH…SIDT) and 145–253 (YQNN…LYPF).

It belongs to the cysteine-rich repeat secretory protein family.

Its subcellular location is the secreted. The protein is Putative cysteine-rich repeat secretory protein 21 (CRRSP21) of Arabidopsis thaliana (Mouse-ear cress).